Consider the following 308-residue polypeptide: Phosphoribosylaminoimidazole-succinocarboxamide synthase (308 aa).

It belongs to the SAICAR synthetase family.

It carries out the reaction 5-amino-1-(5-phospho-D-ribosyl)imidazole-4-carboxylate + L-aspartate + ATP = (2S)-2-[5-amino-1-(5-phospho-beta-D-ribosyl)imidazole-4-carboxamido]succinate + ADP + phosphate + 2 H(+). It participates in purine metabolism; IMP biosynthesis via de novo pathway; 5-amino-1-(5-phospho-D-ribosyl)imidazole-4-carboxamide from 5-amino-1-(5-phospho-D-ribosyl)imidazole-4-carboxylate: step 1/2. This Xanthomonas oryzae pv. oryzae (strain PXO99A) protein is Phosphoribosylaminoimidazole-succinocarboxamide synthase.